Reading from the N-terminus, the 718-residue chain is Ubiquitin homeostasis protein lub1 (718 aa).

7 WD repeats span residues 12–50 (GHKQ…WTPH), 54–98 (NHEG…PSYY), 101–139 (GHES…YVLK), 140–178 (GHQS…KSIL), 180–217 (HNDC…YELH), 218–257 (GHTS…QCIT), and 259–296 (PTTS…VAPT). Residues 353–448 (QWSQKENEWK…QGHSLESKKE (96 aa)) enclose the PFU domain. The PUL domain occupies 462-717 (TIFPVSQLLF…VDAEKQILSL (256 aa)).

In terms of assembly, interacts with cdc48.

The protein localises to the nucleus. The protein resides in the cytoplasm. In terms of biological role, acts as a negative regulator of vacuole-dependent ubiquitin degradation. The chain is Ubiquitin homeostasis protein lub1 (lub1) from Schizosaccharomyces pombe (strain 972 / ATCC 24843) (Fission yeast).